Consider the following 830-residue polypeptide: uncharacterized protein (830 aa).

Residues 1–12 are compositionally biased toward basic and acidic residues; the sequence is MEKASKNKESGV. The disordered stretch occupies residues 1–61; sequence MEKASKNKES…SIKSKNKKKT (61 aa). Residues 15–25 show a composition bias toward polar residues; that stretch reads ANNSFLQNFGV. One can recognise a Helicase ATP-binding domain in the interval 249 to 433; sequence TVSKSSASGG…YSLVKFLHIN (185 aa). 262–269 lines the ATP pocket; the sequence is DDMGLGKT. Positions 384 to 387 match the DEAH box motif; it reads DEAH. Residues 662 to 816 enclose the Helicase C-terminal domain; it reads EEDDTVRGLR…KSVFTSKKLT (155 aa). Ser712 carries the post-translational modification Phosphoserine.

It belongs to the SNF2/RAD54 helicase family.

Its subcellular location is the nucleus. This is an uncharacterized protein from Schizosaccharomyces pombe (strain 972 / ATCC 24843) (Fission yeast).